We begin with the raw amino-acid sequence, 192 residues long: Cell division protein SepF (192 aa).

The interval 154–192 is disordered; sequence QEEPAPSNVTTTTQQSEETISESVTAPEPAWGTPVASAI. Residues 162–178 are compositionally biased toward low complexity; the sequence is VTTTTQQSEETISESVT.

It belongs to the SepF family. Homodimer. Interacts with FtsZ.

It localises to the cytoplasm. Functionally, cell division protein that is part of the divisome complex and is recruited early to the Z-ring. Probably stimulates Z-ring formation, perhaps through the cross-linking of FtsZ protofilaments. Its function overlaps with FtsA. In Prochlorococcus marinus (strain MIT 9211), this protein is Cell division protein SepF.